The following is a 255-amino-acid chain: Diphthine synthase (255 aa).

S-adenosyl-L-methionine-binding positions include Leu9, Asp85, Val88, 113–114 (SI), Leu164, Ala207, and His232.

The protein belongs to the diphthine synthase family. In terms of assembly, homodimer.

The enzyme catalyses 2-[(3S)-amino-3-carboxypropyl]-L-histidyl-[translation elongation factor 2] + 3 S-adenosyl-L-methionine = diphthine-[translation elongation factor 2] + 3 S-adenosyl-L-homocysteine + 3 H(+). The protein operates within protein modification; peptidyl-diphthamide biosynthesis. Functionally, S-adenosyl-L-methionine-dependent methyltransferase that catalyzes the trimethylation of the amino group of the modified target histidine residue in translation elongation factor 2 (EF-2), to form an intermediate called diphthine. The three successive methylation reactions represent the second step of diphthamide biosynthesis. The polypeptide is Diphthine synthase (Methanococcus maripaludis (strain DSM 14266 / JCM 13030 / NBRC 101832 / S2 / LL)).